The sequence spans 275 residues: Lectin (275 aa).

Residues 1–30 form the signal peptide; the sequence is MASLQTQMISFYLIFLSILLTTIFFFKVNS. D-glucose is bound by residues D111 and G129. E149 and D151 together coordinate Mn(2+). D151, F153, N155, and D159 together coordinate Ca(2+). Positions 159 and 166 each coordinate Mn(2+). A propeptide spanning residues 211 to 217 is cleaved from the precursor; the sequence is NSLEEEN. D-glucose is bound by residues G246 and A247. Residues 270–275 constitute a propeptide that is removed on maturation; it reads KQAADA.

This sequence belongs to the leguminous lectin family. Heterotetramer of two alpha and two beta chains. Post-translationally, the mature form consists of two chains, alpha and beta, produced by cleavage of the immature protein. These remain cleaved, yet fold together to form one subunit.

Functionally, D-mannose specific lectin. The polypeptide is Lectin (Lens culinaris subsp. culinaris (Cultivated lentil)).